The sequence spans 336 residues: tRNA N6-adenosine threonylcarbamoyltransferase (336 aa).

Fe cation contacts are provided by H111 and H115. Residues 133 to 137, D166, G179, and N276 contribute to the substrate site; that span reads LISGG. Fe cation is bound at residue D301.

Belongs to the KAE1 / TsaD family. The cofactor is Fe(2+).

The protein localises to the cytoplasm. It catalyses the reaction L-threonylcarbamoyladenylate + adenosine(37) in tRNA = N(6)-L-threonylcarbamoyladenosine(37) in tRNA + AMP + H(+). Its function is as follows. Required for the formation of a threonylcarbamoyl group on adenosine at position 37 (t(6)A37) in tRNAs that read codons beginning with adenine. Is involved in the transfer of the threonylcarbamoyl moiety of threonylcarbamoyl-AMP (TC-AMP) to the N6 group of A37, together with TsaE and TsaB. TsaD likely plays a direct catalytic role in this reaction. The chain is tRNA N6-adenosine threonylcarbamoyltransferase from Wolbachia pipientis subsp. Culex pipiens (strain wPip).